We begin with the raw amino-acid sequence, 23 residues long: Magainin-R2 (23 aa).

As to expression, expressed by the skin glands.

Its subcellular location is the secreted. Antimicrobial peptide. The chain is Magainin-R2 from Xenopus ruwenzoriensis (Uganda clawed frog).